The sequence spans 488 residues: Glutamyl-tRNA(Gln) amidotransferase subunit A, mitochondrial (488 aa).

Residues Lys62 and Ser140 each act as charge relay system in the active site. Ser164 acts as the Acyl-ester intermediate in catalysis. Residues 205 to 228 (GHDDNDPTSITPQTRERIQDRLSR) are disordered. Basic and acidic residues predominate over residues 218 to 227 (TRERIQDRLS).

This sequence belongs to the amidase family. GatA subfamily. As to quaternary structure, subunit of the heterotrimeric GatCAB amidotransferase (AdT) complex, composed of A, B and C subunits.

The protein localises to the mitochondrion. The catalysed reaction is L-glutamyl-tRNA(Gln) + L-glutamine + ATP + H2O = L-glutaminyl-tRNA(Gln) + L-glutamate + ADP + phosphate + H(+). In terms of biological role, allows the formation of correctly charged Gln-tRNA(Gln) through the transamidation of misacylated Glu-tRNA(Gln) in the mitochondria. The reaction takes place in the presence of glutamine and ATP through an activated gamma-phospho-Glu-tRNA(Gln). In Tuber melanosporum (strain Mel28) (Perigord black truffle), this protein is Glutamyl-tRNA(Gln) amidotransferase subunit A, mitochondrial.